The chain runs to 465 residues: Argininosuccinate lyase (465 aa).

This sequence belongs to the lyase 1 family. Argininosuccinate lyase subfamily.

The protein resides in the cytoplasm. The catalysed reaction is 2-(N(omega)-L-arginino)succinate = fumarate + L-arginine. It functions in the pathway amino-acid biosynthesis; L-arginine biosynthesis; L-arginine from L-ornithine and carbamoyl phosphate: step 3/3. The protein is Argininosuccinate lyase of Clostridium botulinum (strain Eklund 17B / Type B).